A 446-amino-acid chain; its full sequence is Argininosuccinate synthase (446 aa).

ATP contacts are provided by residues 17–25 (AFSGGLDTS) and Ala-43. Residue Tyr-99 participates in L-citrulline binding. Residues Gly-129 and Thr-131 each coordinate ATP. L-aspartate is bound by residues Thr-131, Asn-135, and Asp-136. Position 135 (Asn-135) interacts with L-citrulline. Asp-136 contacts ATP. L-citrulline is bound by residues Arg-139 and Ser-192. Asp-194 is an ATP binding site. L-citrulline is bound by residues Thr-201, Glu-203, and Glu-280.

Belongs to the argininosuccinate synthase family. Type 2 subfamily. As to quaternary structure, homotetramer.

It is found in the cytoplasm. It carries out the reaction L-citrulline + L-aspartate + ATP = 2-(N(omega)-L-arginino)succinate + AMP + diphosphate + H(+). It participates in amino-acid biosynthesis; L-arginine biosynthesis; L-arginine from L-ornithine and carbamoyl phosphate: step 2/3. The polypeptide is Argininosuccinate synthase (Polaromonas sp. (strain JS666 / ATCC BAA-500)).